A 138-amino-acid chain; its full sequence is Single-stranded DNA-binding protein 3 (138 aa).

An SSB domain is found at 1–104 (MINNIVLVGR…VVAENFQLLE (104 aa)). The segment covering 105 to 121 (SRNSQQQTNQSGNSSNS) has biased composition (low complexity). Positions 105–138 (SRNSQQQTNQSGNSSNSYFGNANKMDISDDDLPF) are disordered. An Important for interaction with partner proteins motif is present at residues 133-138 (DDDLPF).

Homotetramer.

Its function is as follows. Plays an important role in DNA replication, recombination and repair. Binds to ssDNA and to an array of partner proteins to recruit them to their sites of action during DNA metabolism. This is Single-stranded DNA-binding protein 3 (ssb3) from Streptococcus agalactiae serotype V (strain ATCC BAA-611 / 2603 V/R).